A 107-amino-acid polypeptide reads, in one-letter code: UPF0145 protein YbjQ (107 aa).

Belongs to the UPF0145 family.

In Shigella flexneri, this protein is UPF0145 protein YbjQ.